The following is a 313-amino-acid chain: Formate-nitrite transporter (313 aa).

Residues 1-47 (MPKSNTKYVIDPLSVKTSCSSEESYIRCVEYGKSKAHYSSLILLAKA) lie on the Cytoplasmic side of the membrane. A helical membrane pass occupies residues 48–68 (ILAGVFVGVCAHASGIAGGLF). The Extracellular segment spans residues 69-77 (YYHKLREYV). Residues 78-98 (GASMSAFVYGFTFPIAFLCII) traverse the membrane as a helical segment. The Cytoplasmic portion of the chain corresponds to 99–128 (CTGSDLFTGNTLAVTTALLHGKVSCLEYVR). The chain crosses the membrane as a helical span at residues 129–149 (VMCISLFGNYVGAVSFAFFVS). The Extracellular portion of the chain corresponds to 150 to 185 (YGSGAFHKKEQVDKNHIFQFLNDIAVKKVNHTFVEC). Asn179 carries an N-linked (GlcNAc...) asparagine glycan. The helical transmembrane segment at 186-206 (ICLAIGCNIFVCLAVYFVLSI) threads the bilayer. The Cytoplasmic portion of the chain corresponds to 207–211 (KDGSG). The helical transmembrane segment at 212 to 232 (MVFSVFFAVYAFAIAGYEHII) threads the bilayer. Topologically, residues 233-260 (ANIYTLNISLMIDTEVSFTQVYFKNLLP) are extracellular. Asn239 is a glycosylation site (N-linked (GlcNAc...) asparagine). Residues 261–281 (TLIGNYIAGALVLACPLFFIY) traverse the membrane as a helical segment. Residues 282–313 (RSYYINYEKMNEPSGGSLRSISIEMKNDGGAT) lie on the Cytoplasmic side of the membrane.

This sequence belongs to the FNT transporter (TC 1.A.16) family. Homopentamer.

Its subcellular location is the cell membrane. The protein localises to the vacuole membrane. It carries out the reaction (S)-lactate(in) + H(+)(in) = (S)-lactate(out) + H(+)(out). The catalysed reaction is formate(in) + H(+)(in) = formate(out) + H(+)(out). It catalyses the reaction pyruvate(out) + H(+)(out) = pyruvate(in) + H(+)(in). The enzyme catalyses acetate(out) + H(+)(out) = acetate(in) + H(+)(in). Inhibited by the Malaria Box compound MMV007839 and its derivatives BH296 and BH267.meta. In terms of biological role, monocarboxylate-proton symporter that mediates the efflux of the waste product lactate in the intraerythrocytic parasites; active in acidic-to-neutral pH range. Transports L-lactate. This is Formate-nitrite transporter from Plasmodium ovale.